Here is a 792-residue protein sequence, read N- to C-terminus: E3 UFM1-protein ligase 1 (792 aa).

N-acetylalanine is present on Ala-2. A mediates interaction with DDRGK1 region spans residues 2 to 200 (ADAWEEIRRL…RGLFSAITRP (199 aa)). A required for E3 UFM1-protein ligase activity region spans residues 2–212 (ADAWEEIRRL…VNSLISRYGF (211 aa)). Residues 121–250 (DRLAEEVNDK…KAVFIPDIYS (130 aa)) are involved in CDK5RAP3-binding. Positions 200–400 (PTAVNSLISR…NPVHLITEED (201 aa)) are mediates interaction with TRIP4. Residues 412–471 (TSKKDKKDERRRKATEGSGSVRGGGGSNAREYKIKKTKKKGRKDDDSDDESSHTGKKKPE) are disordered. Residue Arg-433 is modified to Omega-N-methylarginine. The segment covering 453-471 (RKDDDSDDESSHTGKKKPE) has biased composition (basic and acidic residues). Residue Ser-458 is modified to Phosphoserine. Positions 488–682 (LQDAPEEFIS…QLKVTEDPAL (195 aa)) are mediates interaction with CDK5RAP3. Thr-534 is subject to Phosphothreonine. Ser-752 carries the post-translational modification Phosphoserine.

It belongs to the UFL1 family. In terms of assembly, catalytic component of the UFM1 ribosome E3 ligase (UREL) complex, composed of UFL1, DDRGK1 and CDK5RAP3. Interacts with E2-like enzyme UFC1. Interacts with RELA. Interacts with NBN; promoting recruitment to double-strand breaks following DNA damage. Interacts (when phosphorylated) with YWHAG/14-3-3-gamma; sequestering UFL1 and preventing its association with PDCD1/PD-1 substrate. Post-translationally, ubiquitinated, leading to its degradation by the proteasome. Interaction with CDK5RAP3 protects both proteins against ubiquitination and degradation via the proteasome. In terms of processing, phosphorylation at Thr-534 by AMPK promotes its interaction with YWHAG/14-3-3-gamma, thereby preventing UFL1 association with PDCD1/PD-1 substrate.

It localises to the endoplasmic reticulum membrane. The protein localises to the cytoplasm. It is found in the cytosol. Its subcellular location is the nucleus. The protein resides in the chromosome. E3 protein ligase that mediates ufmylation, the covalent attachment of the ubiquitin-like modifier UFM1 to lysine residues on target proteins, and which plays a key role in various processes, such as ribosome recycling, response to DNA damage, interferon response or reticulophagy (also called ER-phagy). Catalyzes ufmylation of many protein, such as CD274/PD-L1, CDK5RAP3, CYB5R3, DDRGK1, EIF6, histone H4, MRE11, P4HB, PDCD1/PD-1, TRIP4, RPN1, RPS20/uS10, RPL10/uL16, RPL26/uL24, SYVN1/HRD1 and TP53/p53. As part of the UREL complex, plays a key role in ribosome recycling by catalyzing mono-ufmylation of RPL26/uL24 subunit of the 60S ribosome. Ufmylation of RPL26/uL24 occurs on free 60S ribosomes following ribosome dissociation: it weakens the junction between post-termination 60S subunits and SEC61 translocons, promoting release and recycling of the large ribosomal subunit from the endoplasmic reticulum membrane. Ufmylation of RPL26/uL24 and subsequent 60S ribosome recycling either take place after normal termination of translation or after ribosome stalling during cotranslational translocation at the endoplasmic reticulum. Involved in reticulophagy in response to endoplasmic reticulum stress by mediating ufmylation of proteins such as CYB5R3 and RPN1, thereby promoting lysosomal degradation of ufmylated proteins. Ufmylation in response to endoplasmic reticulum stress is essential for processes such as hematopoiesis, blood vessel morphogenesis or inflammatory response. Regulates inflammation in response to endoplasmic reticulum stress by promoting reticulophagy, leading to inhibit the activity of the NF-kappa-B transcription factor. Mediates ufmylation of DDRGK1 and CDK5RAP3; the role of these modifications is however unclear: as both DDRGK1 and CDK5RAP3 act as substrate adapters for ufmylation, it is uncertain whether ufmylation of these proteins is, a collateral effect or is required for ufmylation. Acts as a negative regulator of T-cell activation by mediating ufmylation and stabilization of PDCD1/PD-1. Also involved in the response to DNA damage: recruited to double-strand break sites following DNA damage and mediates monoufmylation of histone H4 and ufmylation of MRE11. Mediates ufmylation of TP53/p53, promoting its stability. Catalyzes ufmylation of TRIP4, thereby playing a role in nuclear receptor-mediated transcription. Required for hematopoietic stem cell function and hematopoiesis. This chain is E3 UFM1-protein ligase 1, found in Bos taurus (Bovine).